We begin with the raw amino-acid sequence, 228 residues long: 2,3-bisphosphoglycerate-dependent phosphoglycerate mutase (228 aa).

Residues 8-15, 21-22, Arg60, 87-90, Lys98, 114-115, and 183-184 contribute to the substrate site; these read RHGLSEWN, TG, ERHY, RR, and GN. His9 acts as the Tele-phosphohistidine intermediate in catalysis. Glu87 (proton donor/acceptor) is an active-site residue.

Belongs to the phosphoglycerate mutase family. BPG-dependent PGAM subfamily.

The catalysed reaction is (2R)-2-phosphoglycerate = (2R)-3-phosphoglycerate. The protein operates within carbohydrate degradation; glycolysis; pyruvate from D-glyceraldehyde 3-phosphate: step 3/5. Functionally, catalyzes the interconversion of 2-phosphoglycerate and 3-phosphoglycerate. The sequence is that of 2,3-bisphosphoglycerate-dependent phosphoglycerate mutase from Enterococcus faecalis (strain ATCC 700802 / V583).